Consider the following 248-residue polypeptide: 5'-nucleotidase SurE (248 aa).

The a divalent metal cation site is built by Asp-8, Asp-9, Ser-39, and Asn-92.

The protein belongs to the SurE nucleotidase family. A divalent metal cation serves as cofactor.

The protein localises to the cytoplasm. It catalyses the reaction a ribonucleoside 5'-phosphate + H2O = a ribonucleoside + phosphate. Its function is as follows. Nucleotidase that shows phosphatase activity on nucleoside 5'-monophosphates. The protein is 5'-nucleotidase SurE of Tolumonas auensis (strain DSM 9187 / NBRC 110442 / TA 4).